The primary structure comprises 100 residues: Large ribosomal subunit protein uL23 (100 aa).

The protein belongs to the universal ribosomal protein uL23 family. Part of the 50S ribosomal subunit. Contacts protein L29, and trigger factor when it is bound to the ribosome.

Its function is as follows. One of the early assembly proteins it binds 23S rRNA. One of the proteins that surrounds the polypeptide exit tunnel on the outside of the ribosome. Forms the main docking site for trigger factor binding to the ribosome. The chain is Large ribosomal subunit protein uL23 from Pseudoalteromonas atlantica (strain T6c / ATCC BAA-1087).